Reading from the N-terminus, the 365-residue chain is tRNA dimethylallyltransferase (365 aa).

ATP is bound at residue 23-30 (APTASGKT). 25-30 (TASGKT) lines the substrate pocket. Interaction with substrate tRNA regions lie at residues 48–51 (DSAL), 172–176 (QRITR), and 256–261 (RCVGYR).

Belongs to the IPP transferase family. In terms of assembly, monomer. Mg(2+) serves as cofactor.

It catalyses the reaction adenosine(37) in tRNA + dimethylallyl diphosphate = N(6)-dimethylallyladenosine(37) in tRNA + diphosphate. Catalyzes the transfer of a dimethylallyl group onto the adenine at position 37 in tRNAs that read codons beginning with uridine, leading to the formation of N6-(dimethylallyl)adenosine (i(6)A). The sequence is that of tRNA dimethylallyltransferase from Psychrobacter sp. (strain PRwf-1).